Consider the following 358-residue polypeptide: Starch-binding domain-containing protein 1 (358 aa).

The Extracellular portion of the chain corresponds to 1 to 6; sequence MGAVWS. A helical transmembrane segment spans residues 7–23; sequence ALLVGGGLAGALFVWLL. At 24–358 the chain is on the cytoplasmic side; it reads RGGPGDTGKD…KVVHAWWGIH (335 aa). Basic and acidic residues predominate over residues 30–42; sequence TGKDGDAEQEKDA. Disordered regions lie at residues 30–70 and 104–151; these read TGKD…QELV and SREV…SPMG. The span at 50–66 shows a compositional bias: low complexity; sequence PGGHQSGSSGLSPGPSG. S65 carries the phosphoserine modification. Basic and acidic residues predominate over residues 106–115; sequence EVCDNSREHV. S117 carries the post-translational modification Phosphoserine. Residues 126-140 show a composition bias toward polar residues; the sequence is PATSETSNSRSYSEV. Phosphoserine is present on residues S148, S175, S188, and S194. The LIR signature appears at 200-206; that stretch reads HEEWEMV. Phosphoserine is present on residues S210, S211, and S220. The CBM20 domain maps to 258–357; it reads PAGSQQVSVR…DKVVHAWWGI (100 aa).

In terms of assembly, interacts with the ATG8 family proteins GABARAP and GABARAPL1. Interacts with several glycogen-associated proteins, such as GYS2 (liver glycogen synthase), GDE (glycogen debranching enzyme), GBE1 (glycogen branching enzyme 1) and EPM2A (Laforin). Post-translationally, ubiquitinated, which leads to proteasomal degradation. As to expression, expressed at high level in skeletal and cardiac muscles. Moderately expressed in liver and placenta. No expression is found in pancreas, kidney or lung. Present in skeletal muscle, heart and placenta (at protein level).

The protein localises to the preautophagosomal structure membrane. Its subcellular location is the endoplasmic reticulum membrane. The protein resides in the cell membrane. It is found in the sarcolemma. It localises to the T-tubule. In terms of biological role, acts as a cargo receptor for glycogen. Delivers its cargo to an autophagic pathway called glycophagy, resulting in the transport of glycogen to lysosomes. The chain is Starch-binding domain-containing protein 1 from Homo sapiens (Human).